The primary structure comprises 211 residues: Large ribosomal subunit protein uL3 (211 aa).

Glutamine 150 is modified (N5-methylglutamine).

This sequence belongs to the universal ribosomal protein uL3 family. As to quaternary structure, part of the 50S ribosomal subunit. Forms a cluster with proteins L14 and L19. In terms of processing, methylated by PrmB.

In terms of biological role, one of the primary rRNA binding proteins, it binds directly near the 3'-end of the 23S rRNA, where it nucleates assembly of the 50S subunit. The chain is Large ribosomal subunit protein uL3 from Pseudomonas fluorescens (strain SBW25).